We begin with the raw amino-acid sequence, 250 residues long: ATP synthase subunit a (250 aa).

6 helical membrane-spanning segments follow: residues 26 to 46 (FTNA…FLYF), 84 to 104 (FFPL…LGMF), 114 to 134 (IIVT…YGFY), 143 to 163 (VFVP…IEII), 193 to 213 (FVAS…LPLI), and 216 to 236 (VALT…FAVL).

The protein belongs to the ATPase A chain family. As to quaternary structure, F-type ATPases have 2 components, CF(1) - the catalytic core - and CF(0) - the membrane proton channel. CF(1) has five subunits: alpha(3), beta(3), gamma(1), delta(1), epsilon(1). CF(0) has three main subunits: a(1), b(2) and c(9-12). The alpha and beta chains form an alternating ring which encloses part of the gamma chain. CF(1) is attached to CF(0) by a central stalk formed by the gamma and epsilon chains, while a peripheral stalk is formed by the delta and b chains.

It is found in the cell inner membrane. Key component of the proton channel; it plays a direct role in the translocation of protons across the membrane. This Rhizobium etli (strain ATCC 51251 / DSM 11541 / JCM 21823 / NBRC 15573 / CFN 42) protein is ATP synthase subunit a.